A 181-amino-acid polypeptide reads, in one-letter code: Adenine phosphoribosyltransferase (181 aa).

Belongs to the purine/pyrimidine phosphoribosyltransferase family. As to quaternary structure, homodimer.

Its subcellular location is the cytoplasm. The catalysed reaction is AMP + diphosphate = 5-phospho-alpha-D-ribose 1-diphosphate + adenine. It participates in purine metabolism; AMP biosynthesis via salvage pathway; AMP from adenine: step 1/1. In terms of biological role, catalyzes a salvage reaction resulting in the formation of AMP, that is energically less costly than de novo synthesis. The sequence is that of Adenine phosphoribosyltransferase from Colwellia psychrerythraea (strain 34H / ATCC BAA-681) (Vibrio psychroerythus).